Reading from the N-terminus, the 421-residue chain is Gamma-glutamyl phosphate reductase (421 aa).

The protein belongs to the gamma-glutamyl phosphate reductase family.

Its subcellular location is the cytoplasm. It catalyses the reaction L-glutamate 5-semialdehyde + phosphate + NADP(+) = L-glutamyl 5-phosphate + NADPH + H(+). It participates in amino-acid biosynthesis; L-proline biosynthesis; L-glutamate 5-semialdehyde from L-glutamate: step 2/2. Its function is as follows. Catalyzes the NADPH-dependent reduction of L-glutamate 5-phosphate into L-glutamate 5-semialdehyde and phosphate. The product spontaneously undergoes cyclization to form 1-pyrroline-5-carboxylate. This chain is Gamma-glutamyl phosphate reductase, found in Ruegeria sp. (strain TM1040) (Silicibacter sp.).